Reading from the N-terminus, the 481-residue chain is Glucokinase-1 (481 aa).

One can recognise a Hexokinase domain in the interval 4 to 477 (PKLTKAVDSI…SGVGAALCAL (474 aa)). The hexokinase small subdomain stretch occupies residues 64-204 (SGQEHGVTML…LSNVHVVALT (141 aa)). Residue Lys101 coordinates ATP. The tract at residues 146–172 (KMGFTFSYPVDQTSLSSGKLIRWTKGF) is glucose-binding. Residues 205-466 (NDTTGTLLAR…RDVHLRISKD (262 aa)) are hexokinase large subdomain. 466–471 (DGSGVG) serves as a coordination point for ATP.

This sequence belongs to the hexokinase family.

It catalyses the reaction D-glucose + ATP = D-glucose 6-phosphate + ADP + H(+). It carries out the reaction a D-hexose + ATP = a D-hexose 6-phosphate + ADP + H(+). The catalysed reaction is D-mannose + ATP = D-mannose 6-phosphate + ADP + H(+). The protein operates within carbohydrate metabolism; hexose metabolism. It functions in the pathway carbohydrate degradation; glycolysis; D-glyceraldehyde 3-phosphate and glycerone phosphate from D-glucose: step 1/4. In terms of biological role, glukokinase specific for aldohexoses. Phosphorylates glucose and mannose, but not fructose. The polypeptide is Glucokinase-1 (GLK1) (Kluyveromyces lactis (strain ATCC 8585 / CBS 2359 / DSM 70799 / NBRC 1267 / NRRL Y-1140 / WM37) (Yeast)).